The sequence spans 156 residues: UPF0460 protein in nifX 3'region (156 aa).

This sequence belongs to the UPF0460 family.

This chain is UPF0460 protein in nifX 3'region, found in Rhodobacter capsulatus (Rhodopseudomonas capsulata).